A 360-amino-acid polypeptide reads, in one-letter code: MQIIRHSEQTLKTALISKNPVLVSQYEKLNAGEQRLMNEAFQPASDLFGPITLHSPSDWITSHPEAPQDFEQFFSDPYRKTPSPNKRSIYIQSIGSLGNTRIISEEYIKWLTGYCKAYFYGLRVKLLEPVPVSVTRCSFRVNENTHNLQIHAGDILKFLKKKKPEDAFCVVGITMIDLYPRDSWNFVFGQASLTDGVGIFSFARYGSDFYSMHYKGKVKKLKKTSSSDYSIFDNYYIPEITSVLLLRSCKTLTHEIGHIFGLRHCQWLACLMQGSNHLEEADRRPLNLCPICLHKLQCAVGFSIVERYKALVRWIDDESSDTPGATPEHSHEDNGNLPKPVEAFKEWKEWIIKCLAVLQK.

His254 is a binding site for Zn(2+). Glu255 (proton acceptor) is an active-site residue. Zn(2+)-binding residues include His258, His264, Cys265, Cys270, Cys289, and Cys292.

This sequence belongs to the peptidase M54 family. Zn(2+) serves as cofactor. As to expression, down-regulated in testis from patients with maturation arrest (MA) or Sertoli cell-only syndrome (SCOS).

Its function is as follows. Probable zinc metalloprotease. This is Archaemetzincin-2 (AMZ2) from Homo sapiens (Human).